Reading from the N-terminus, the 58-residue chain is uncharacterized protein (58 aa).

It localises to the plastid. Its subcellular location is the chloroplast. This is an uncharacterized protein from Pyropia yezoensis (Susabi-nori).